A 222-amino-acid chain; its full sequence is NADH dehydrogenase [ubiquinone] iron-sulfur protein 8-B, mitochondrial (222 aa).

4Fe-4S ferredoxin-type domains are found at residues 114–143 and 153–182; these read RRYP…IEAE and TRYD…EGPN. Positions 123, 126, 129, 133, 162, 165, 168, and 172 each coordinate [4Fe-4S] cluster.

The protein belongs to the complex I 23 kDa subunit family. In terms of assembly, complex I is composed of at least 49 different subunits. This is a component of the iron-sulfur (IP) fragment of the enzyme. It depends on [4Fe-4S] cluster as a cofactor.

It is found in the mitochondrion. It carries out the reaction a ubiquinone + NADH + 5 H(+)(in) = a ubiquinol + NAD(+) + 4 H(+)(out). Its function is as follows. Core subunit of the mitochondrial membrane respiratory chain NADH dehydrogenase (Complex I) that is believed to belong to the minimal assembly required for catalysis. Complex I functions in the transfer of electrons from NADH to the respiratory chain. The immediate electron acceptor for the enzyme is believed to be ubiquinone. May donate electrons to ubiquinone. In Arabidopsis thaliana (Mouse-ear cress), this protein is NADH dehydrogenase [ubiquinone] iron-sulfur protein 8-B, mitochondrial.